The primary structure comprises 578 residues: Arginine--tRNA ligase (578 aa).

The 'HIGH' region motif lies at 127–137; sequence PNLAKEMHVGH.

Belongs to the class-I aminoacyl-tRNA synthetase family. Monomer.

It localises to the cytoplasm. It catalyses the reaction tRNA(Arg) + L-arginine + ATP = L-arginyl-tRNA(Arg) + AMP + diphosphate. In Pseudomonas fluorescens (strain Pf0-1), this protein is Arginine--tRNA ligase.